The chain runs to 284 residues: Bifunctional protein FolD (284 aa).

Residues 166–168 and I232 contribute to the NADP(+) site; that span reads GAS.

It belongs to the tetrahydrofolate dehydrogenase/cyclohydrolase family. In terms of assembly, homodimer.

The catalysed reaction is (6R)-5,10-methylene-5,6,7,8-tetrahydrofolate + NADP(+) = (6R)-5,10-methenyltetrahydrofolate + NADPH. It catalyses the reaction (6R)-5,10-methenyltetrahydrofolate + H2O = (6R)-10-formyltetrahydrofolate + H(+). The protein operates within one-carbon metabolism; tetrahydrofolate interconversion. Its function is as follows. Catalyzes the oxidation of 5,10-methylenetetrahydrofolate to 5,10-methenyltetrahydrofolate and then the hydrolysis of 5,10-methenyltetrahydrofolate to 10-formyltetrahydrofolate. This Shewanella amazonensis (strain ATCC BAA-1098 / SB2B) protein is Bifunctional protein FolD.